Reading from the N-terminus, the 182-residue chain is Crossover junction endodeoxyribonuclease RuvC (182 aa).

Active-site residues include aspartate 7, glutamate 69, and aspartate 141. 3 residues coordinate Mg(2+): aspartate 7, glutamate 69, and aspartate 141.

This sequence belongs to the RuvC family. In terms of assembly, homodimer which binds Holliday junction (HJ) DNA. The HJ becomes 2-fold symmetrical on binding to RuvC with unstacked arms; it has a different conformation from HJ DNA in complex with RuvA. In the full resolvosome a probable DNA-RuvA(4)-RuvB(12)-RuvC(2) complex forms which resolves the HJ. Requires Mg(2+) as cofactor.

The protein resides in the cytoplasm. The catalysed reaction is Endonucleolytic cleavage at a junction such as a reciprocal single-stranded crossover between two homologous DNA duplexes (Holliday junction).. Functionally, the RuvA-RuvB-RuvC complex processes Holliday junction (HJ) DNA during genetic recombination and DNA repair. Endonuclease that resolves HJ intermediates. Cleaves cruciform DNA by making single-stranded nicks across the HJ at symmetrical positions within the homologous arms, yielding a 5'-phosphate and a 3'-hydroxyl group; requires a central core of homology in the junction. The consensus cleavage sequence is 5'-(A/T)TT(C/G)-3'. Cleavage occurs on the 3'-side of the TT dinucleotide at the point of strand exchange. HJ branch migration catalyzed by RuvA-RuvB allows RuvC to scan DNA until it finds its consensus sequence, where it cleaves and resolves the cruciform DNA. The polypeptide is Crossover junction endodeoxyribonuclease RuvC (Variovorax paradoxus (strain S110)).